The following is a 573-amino-acid chain: 3-oxosteroid 1-dehydrogenase (573 aa).

Residue 7 to 36 participates in FAD binding; it reads DLIVVGSGAGACWAPIRAQEQGLKTLVVEK.

Belongs to the FAD-dependent oxidoreductase 2 family. 3-oxosteroid dehydrogenase subfamily. FAD is required as a cofactor.

It is found in the cell inner membrane. It carries out the reaction a 3-oxosteroid + A = a 3-oxo-Delta(1)-steroid + AH2. It participates in lipid metabolism; steroid degradation. Its function is as follows. Dehydrogenates steroids by introducing a double bond in steroid ring A. In Comamonas testosteroni (Pseudomonas testosteroni), this protein is 3-oxosteroid 1-dehydrogenase.